Reading from the N-terminus, the 318-residue chain is Magnetosome protein MamM (318 aa).

Residues 1-210 are transmembrane domain (TMD); the sequence is MRKSGCAVCS…FMDAYRGLMD (210 aa). A run of 4 helical transmembrane segments spans residues 13–33, 39–59, 81–101, and 117–137; these read IGWV…FVGL, AMLA…MVII, FILS…LLVH, and LIVL…YFYS. The interval 211-318 is C-terminal domain (CTD); that stretch reads HTAGEAVQNR…DEVMLSKVDN (108 aa). Residues D249, H264, H285, and E289 each coordinate Fe cation.

Belongs to the cation diffusion facilitator (CDF) transporter (TC 2.A.4) family. In terms of assembly, forms homodimers via its C-terminal domain (CTD) in the presence of metal cations. Interacts with MamB via their CTD. Isolated CTD forms homodimers.

The protein localises to the magnetosome membrane. It localises to the cell inner membrane. Essential for magnetosome formation; required for stable accumulation of MamB. May nucleate iron crystal formation. Probably binds and transports iron. Binds divalent cations, possibly up to 3 Zn(2+) per dimer in vitro, probably iron in vivo. One of 7 genes (mamLQBIEMO) able to induce magnetosome membrane biogenesis; coexpression of mamLQRBIEMO in a deletion of the 17 gene mamAB operon restores magnetosome vesicle formation but not magnetite biosynthesis. This is Magnetosome protein MamM from Magnetospirillum gryphiswaldense (strain DSM 6361 / JCM 21280 / NBRC 15271 / MSR-1).